Reading from the N-terminus, the 133-residue chain is Nickel-responsive regulator (133 aa).

H76, H87, H89, and C95 together coordinate Ni(2+).

The protein belongs to the transcriptional regulatory CopG/NikR family. Homotetramer. Ni(2+) is required as a cofactor.

Transcriptional repressor of the nikABCDE operon. Is active in the presence of excessive concentrations of intracellular nickel. The polypeptide is Nickel-responsive regulator (Escherichia coli O6:K15:H31 (strain 536 / UPEC)).